We begin with the raw amino-acid sequence, 369 residues long: N-succinyl-L-Arg/Lys racemase (369 aa).

Substrate-binding positions include Tyr-26, Asp-51, 161-163 (KMK), and 191-193 (DVN). The Mg(2+) site is built by Asp-191, Glu-218, and Asp-243. Substrate-binding positions include Lys-267, 295–296 (SM), and 320–322 (ELT).

Belongs to the mandelate racemase/muconate lactonizing enzyme family. It depends on Mg(2+) as a cofactor.

Its function is as follows. Catalyzes efficient racemization of N-succinyl-L-Arg and N-succinyl-L-Lys, suggesting that these are physiological substrates of this enzyme. Has low activity with L-Asp-L-Lys, and even lower activity with L-Leu-L-Arg, L-Leu-L-Lys, N-succinyl-L-His and N-succinyl-L-Met (in vitro). The sequence is that of N-succinyl-L-Arg/Lys racemase from Bacillus cereus (strain ATCC 14579 / DSM 31 / CCUG 7414 / JCM 2152 / NBRC 15305 / NCIMB 9373 / NCTC 2599 / NRRL B-3711).